Reading from the N-terminus, the 958-residue chain is Dermatan-sulfate epimerase (958 aa).

An N-terminal signal peptide occupies residues 1-22; that stretch reads MRTHTRGAPSVFFIYLLCFVSA. Residues 23 to 902 are Lumenal-facing; it reads YITDENPEVM…APSLSASYTR (880 aa). Asn-183 is a glycosylation site (N-linked (GlcNAc...) (complex) asparagine). His-205 serves as the catalytic Proton donor. The active site involves Tyr-261. Residue Asn-336 is glycosylated (N-linked (GlcNAc...) (high mannose) asparagine). Asn-411 carries N-linked (GlcNAc...) (complex) asparagine glycosylation. Residues His-452 and Glu-470 each coordinate Mn(2+). Tyr-473 is a catalytic residue. Mn(2+) is bound at residue Asn-481. The N-linked (GlcNAc...) (complex) asparagine glycan is linked to Asn-642. A glycan (N-linked (GlcNAc...) (paucimannose) asparagine) is linked at Asn-648. The helical transmembrane segment at 903-923 threads the bilayer; the sequence is LFLILNIAIFFVMLAMQLTYF. Topologically, residues 924 to 933 are cytoplasmic; sequence QRAQSLHGQR. The chain crosses the membrane as a helical span at residues 934–954; it reads CLYAVLLIDSCILLWLYSSCS. The Lumenal portion of the chain corresponds to 955 to 958; it reads QSQC.

This sequence belongs to the dermatan-sulfate isomerase family. Requires Mn(2+) as cofactor. N-glycosylated. Glycosylation is important for enzymatic activity. Ubiquitously expressed with higher expression in kidney and ovary and lower expression in brain, colon and thymus. Also expressed in renal cell carcinomas, brain tumors, and in a part of melanomas and adenocarcinomas from organs other than the breast. Expressed in squamous cell carcinomas (SCC), glioma, and some adenocarcinoma cell lines, but not in breast cancer cell lines or any normal tissues (at protein level).

The protein localises to the endoplasmic reticulum membrane. It localises to the golgi apparatus membrane. The protein resides in the cytoplasmic vesicle membrane. Its subcellular location is the microsome membrane. It catalyses the reaction chondroitin 4'-sulfate = dermatan 4'-sulfate. The protein operates within glycan metabolism; chondroitin sulfate biosynthesis. It participates in glycan metabolism; heparan sulfate biosynthesis. In terms of biological role, converts D-glucuronic acid to L-iduronic acid (IdoUA) residues. Plays an important role in the biosynthesis of the glycosaminoglycan/mucopolysaccharide dermatan sulfate. This is Dermatan-sulfate epimerase (DSE) from Homo sapiens (Human).